Here is a 274-residue protein sequence, read N- to C-terminus: Diaminopimelate epimerase (274 aa).

Residues Asn11, Gln44, and Asn64 each contribute to the substrate site. The active-site Proton donor is the Cys73. Substrate-binding positions include 74-75 (GN), Asn157, Asn190, and 208-209 (ER). Catalysis depends on Cys217, which acts as the Proton acceptor. Position 218–219 (218–219 (GS)) interacts with substrate.

The protein belongs to the diaminopimelate epimerase family. In terms of assembly, homodimer.

The protein resides in the cytoplasm. The catalysed reaction is (2S,6S)-2,6-diaminopimelate = meso-2,6-diaminopimelate. It participates in amino-acid biosynthesis; L-lysine biosynthesis via DAP pathway; DL-2,6-diaminopimelate from LL-2,6-diaminopimelate: step 1/1. Functionally, catalyzes the stereoinversion of LL-2,6-diaminopimelate (L,L-DAP) to meso-diaminopimelate (meso-DAP), a precursor of L-lysine and an essential component of the bacterial peptidoglycan. This Pasteurella multocida (strain Pm70) protein is Diaminopimelate epimerase.